The chain runs to 507 residues: Putative thymidine phosphorylase (507 aa).

Belongs to the thymidine/pyrimidine-nucleoside phosphorylase family. Type 2 subfamily.

The catalysed reaction is thymidine + phosphate = 2-deoxy-alpha-D-ribose 1-phosphate + thymine. This chain is Putative thymidine phosphorylase, found in Ralstonia nicotianae (strain ATCC BAA-1114 / GMI1000) (Ralstonia solanacearum).